Here is a 1711-residue protein sequence, read N- to C-terminus: Receptor-type tyrosine-protein phosphatase V (1711 aa).

An N-terminal signal peptide occupies residues 1–17 (MRPLILLAALLWLQGFL). Residues 18–1074 (AEDDACSSLE…SEPRASISLA (1057 aa)) are Extracellular-facing. Fibronectin type-III domains are found at residues 37–129 (PLLS…TAPT), 130–222 (VVRG…VPPD), 218–305 (PVPP…EWTY), 306–391 (PSYP…LAES), 393–470 (ALPR…ISGY), 475–569 (PPQS…APPT), 565–654 (PAPP…TGWT), 655–749 (PPSA…IPNE), 744–831 (PLIP…VLSV), and 832–926 (EPGP…SAEA). Residues asparagine 42, asparagine 74, asparagine 89, asparagine 117, asparagine 174, asparagine 239, and asparagine 259 are each glycosylated (N-linked (GlcNAc...) asparagine). Asparagine 431 carries N-linked (GlcNAc...) asparagine glycosylation. Asparagine 570, asparagine 620, asparagine 649, asparagine 663, and asparagine 737 each carry an N-linked (GlcNAc...) asparagine glycan. Residues asparagine 851, asparagine 882, asparagine 970, and asparagine 982 are each glycosylated (N-linked (GlcNAc...) asparagine). A helical transmembrane segment spans residues 1075–1095 (IIPLTVMLGAVVGSIVIVCAV). Residues 1096–1711 (LCLLRWRCLK…PRAGKWPAPC (616 aa)) are Cytoplasmic-facing. Tyrosine-protein phosphatase domains follow at residues 1150 to 1409 (FFQE…LLNK) and 1427 to 1696 (DFAQ…LNSA). Substrate is bound by residues aspartate 1316, 1350 to 1356 (CSAGVGR), and glutamine 1394. The active-site Phosphocysteine intermediate is cysteine 1350.

This sequence belongs to the protein-tyrosine phosphatase family. Receptor class 3 subfamily. The cytoplasmic domain contains potential phosphorylation sites. Bone and testis. In the latter, restricted to the basal portion of the seminiferous tubule.

The protein localises to the membrane. The catalysed reaction is O-phospho-L-tyrosyl-[protein] + H2O = L-tyrosyl-[protein] + phosphate. In terms of biological role, protein tyrosine phosphatase that acts as a regulator of energy metabolism. Prevents decarboxylation of osteocalcin (Bglap) via an indirect mechanism, preventing the hormone activity of osteocalcin. Functions in signaling pathways during bone remodeling, as well as serve a broader role in cell interactions associated with differentiation in bone and testis. Associated with differentiation in bone and testis. The chain is Receptor-type tyrosine-protein phosphatase V (Ptprv) from Rattus norvegicus (Rat).